Here is a 31-residue protein sequence, read N- to C-terminus: Photosystem II reaction center protein M (31 aa).

A helical membrane pass occupies residues 5-25; the sequence is ILAFIATALLILVPTAFLLII.

This sequence belongs to the PsbM family. In terms of assembly, PSII is composed of 1 copy each of membrane proteins PsbA, PsbB, PsbC, PsbD, PsbE, PsbF, PsbH, PsbI, PsbJ, PsbK, PsbL, PsbM, PsbT, PsbX, PsbY, PsbZ, Psb30/Ycf12, at least 3 peripheral proteins of the oxygen-evolving complex and a large number of cofactors. It forms dimeric complexes.

It localises to the plastid membrane. In terms of biological role, one of the components of the core complex of photosystem II (PSII). PSII is a light-driven water:plastoquinone oxidoreductase that uses light energy to abstract electrons from H(2)O, generating O(2) and a proton gradient subsequently used for ATP formation. It consists of a core antenna complex that captures photons, and an electron transfer chain that converts photonic excitation into a charge separation. This subunit is found at the monomer-monomer interface. This Cuscuta reflexa (Southern Asian dodder) protein is Photosystem II reaction center protein M.